We begin with the raw amino-acid sequence, 88 residues long: Small ribosomal subunit protein uS15 (88 aa).

Belongs to the universal ribosomal protein uS15 family. As to quaternary structure, part of the 30S ribosomal subunit. Forms a bridge to the 50S subunit in the 70S ribosome, contacting the 23S rRNA.

In terms of biological role, one of the primary rRNA binding proteins, it binds directly to 16S rRNA where it helps nucleate assembly of the platform of the 30S subunit by binding and bridging several RNA helices of the 16S rRNA. Its function is as follows. Forms an intersubunit bridge (bridge B4) with the 23S rRNA of the 50S subunit in the ribosome. The sequence is that of Small ribosomal subunit protein uS15 from Variovorax paradoxus (strain S110).